Reading from the N-terminus, the 313-residue chain is Cytochrome c biogenesis protein CcsA (313 aa).

Transmembrane regions (helical) follow at residues 9 to 29 (ILTH…LITF), 44 to 64 (GIIV…ISSG), 71 to 91 (LYES…IPYF), 111 to 131 (GFAT…VPAL), 143 to 163 (MILG…LLVI), 217 to 237 (VISL…VWAN), 244 to 264 (WNWD…AIYL), and 278 to 298 (AIVA…VNLL).

Belongs to the CcmF/CycK/Ccl1/NrfE/CcsA family. May interact with Ccs1.

It localises to the plastid. Its subcellular location is the chloroplast thylakoid membrane. Required during biogenesis of c-type cytochromes (cytochrome c6 and cytochrome f) at the step of heme attachment. This chain is Cytochrome c biogenesis protein CcsA, found in Solanum bulbocastanum (Wild potato).